The sequence spans 383 residues: 8-amino-7-oxononanoate synthase (383 aa).

Substrate is bound at residue Arg-23. 110-111 provides a ligand contact to pyridoxal 5'-phosphate; it reads GF. Residue His-135 participates in substrate binding. Residues Ser-181, His-209, and Thr-235 each contribute to the pyridoxal 5'-phosphate site. An N6-(pyridoxal phosphate)lysine modification is found at Lys-238. Thr-351 contacts substrate.

This sequence belongs to the class-II pyridoxal-phosphate-dependent aminotransferase family. BioF subfamily. Homodimer. Pyridoxal 5'-phosphate serves as cofactor.

It catalyses the reaction 6-carboxyhexanoyl-[ACP] + L-alanine + H(+) = (8S)-8-amino-7-oxononanoate + holo-[ACP] + CO2. The protein operates within cofactor biosynthesis; biotin biosynthesis. Its function is as follows. Catalyzes the decarboxylative condensation of pimeloyl-[acyl-carrier protein] and L-alanine to produce 8-amino-7-oxononanoate (AON), [acyl-carrier protein], and carbon dioxide. In Aliivibrio fischeri (strain MJ11) (Vibrio fischeri), this protein is 8-amino-7-oxononanoate synthase.